We begin with the raw amino-acid sequence, 232 residues long: Enolase-phosphatase E1 (232 aa).

Belongs to the HAD-like hydrolase superfamily. MasA/MtnC family. Monomer. It depends on Mg(2+) as a cofactor.

The catalysed reaction is 5-methylsulfanyl-2,3-dioxopentyl phosphate + H2O = 1,2-dihydroxy-5-(methylsulfanyl)pent-1-en-3-one + phosphate. It functions in the pathway amino-acid biosynthesis; L-methionine biosynthesis via salvage pathway; L-methionine from S-methyl-5-thio-alpha-D-ribose 1-phosphate: step 3/6. The protein operates within amino-acid biosynthesis; L-methionine biosynthesis via salvage pathway; L-methionine from S-methyl-5-thio-alpha-D-ribose 1-phosphate: step 4/6. Its function is as follows. Bifunctional enzyme that catalyzes the enolization of 2,3-diketo-5-methylthiopentyl-1-phosphate (DK-MTP-1-P) into the intermediate 2-hydroxy-3-keto-5-methylthiopentenyl-1-phosphate (HK-MTPenyl-1-P), which is then dephosphorylated to form the acireductone 1,2-dihydroxy-3-keto-5-methylthiopentene (DHK-MTPene). This Xylella fastidiosa (strain 9a5c) protein is Enolase-phosphatase E1.